The chain runs to 174 residues: ATP-dependent protease subunit HslV (174 aa).

Residue threonine 2 is part of the active site. The Na(+) site is built by glycine 157, cysteine 160, and threonine 163.

This sequence belongs to the peptidase T1B family. HslV subfamily. As to quaternary structure, a double ring-shaped homohexamer of HslV is capped on each side by a ring-shaped HslU homohexamer. The assembly of the HslU/HslV complex is dependent on binding of ATP.

Its subcellular location is the cytoplasm. The enzyme catalyses ATP-dependent cleavage of peptide bonds with broad specificity.. Its activity is regulated as follows. Allosterically activated by HslU binding. Protease subunit of a proteasome-like degradation complex believed to be a general protein degrading machinery. This chain is ATP-dependent protease subunit HslV, found in Cellvibrio japonicus (strain Ueda107) (Pseudomonas fluorescens subsp. cellulosa).